A 492-amino-acid polypeptide reads, in one-letter code: Acetyl-coenzyme A carboxylase carboxyl transferase subunit beta, chloroplastic (492 aa).

Residues 198-219 (STNGSDLTISESSNESESSNES) form a disordered region. Positions 228 to 492 (LWVQCENCYG…FHGRFPLNQN (265 aa)) constitute a CoA carboxyltransferase N-terminal domain. Residues Cys-232, Cys-235, Cys-251, and Cys-254 each contribute to the Zn(2+) site. The segment at 232-254 (CENCYGLNYKKFLKSKMYLCEQC) adopts a C4-type zinc-finger fold.

It belongs to the AccD/PCCB family. Acetyl-CoA carboxylase is a heterohexamer composed of biotin carboxyl carrier protein, biotin carboxylase and 2 subunits each of ACCase subunit alpha and ACCase plastid-coded subunit beta (accD). Requires Zn(2+) as cofactor.

Its subcellular location is the plastid. It localises to the chloroplast stroma. The enzyme catalyses N(6)-carboxybiotinyl-L-lysyl-[protein] + acetyl-CoA = N(6)-biotinyl-L-lysyl-[protein] + malonyl-CoA. It participates in lipid metabolism; malonyl-CoA biosynthesis; malonyl-CoA from acetyl-CoA: step 1/1. Its function is as follows. Component of the acetyl coenzyme A carboxylase (ACC) complex. Biotin carboxylase (BC) catalyzes the carboxylation of biotin on its carrier protein (BCCP) and then the CO(2) group is transferred by the transcarboxylase to acetyl-CoA to form malonyl-CoA. In Citrus sinensis (Sweet orange), this protein is Acetyl-coenzyme A carboxylase carboxyl transferase subunit beta, chloroplastic.